The sequence spans 2153 residues: RNA-directed RNA polymerase L (2153 aa).

His-36, Glu-54, Asp-97, Glu-110, and Val-111 together coordinate Mn(2+). Lys-124 functions as the For endonuclease activity in the catalytic mechanism. Positions 957–1143 constitute a RdRp catalytic domain; that stretch reads TGNVIKFKRR…AVNQEMWKSM (187 aa). Residue Asp-1100 coordinates Mg(2+). Residues 1291 to 2153 are interaction with the viral nucleoprotein; sequence KQAFYSYKHT…FPHDPVSSFY (863 aa).

This sequence belongs to the Bunyavirales RNA polymerase family. Interacts with the viral nucleoprotein; this interaction is required for RdRp function. Mn(2+) serves as cofactor. Requires Mg(2+) as cofactor.

The protein resides in the host cytoplasm. It is found in the host perinuclear region. The catalysed reaction is RNA(n) + a ribonucleoside 5'-triphosphate = RNA(n+1) + diphosphate. In terms of biological role, RNA-dependent RNA polymerase, which is responsible for the replication and transcription of the viral RNA genome using antigenomic RNA as an intermediate. During transcription, synthesizes subgenomic RNAs and assures their capping by a cap-snatching mechanism, which involves the endonuclease activity cleaving the host capped pre-mRNAs. These short capped RNAs are then used as primers for viral transcription. Cleaves ssRNA substrates but not DNA. Seems to downregulate the expression of its own and heterologous mRNAs through its endonuclease activity. The protein is RNA-directed RNA polymerase L of Sin Nombre orthohantavirus (SNV).